The sequence spans 433 residues: Enolase (433 aa).

Residue Gln163 participates in (2R)-2-phosphoglycerate binding. The Proton donor role is filled by Glu205. Residues Asp242, Glu291, and Asp318 each contribute to the Mg(2+) site. 4 residues coordinate (2R)-2-phosphoglycerate: Lys343, Arg372, Ser373, and Lys394. Lys343 acts as the Proton acceptor in catalysis.

It belongs to the enolase family. The cofactor is Mg(2+).

It is found in the cytoplasm. The protein localises to the secreted. Its subcellular location is the cell surface. The catalysed reaction is (2R)-2-phosphoglycerate = phosphoenolpyruvate + H2O. It functions in the pathway carbohydrate degradation; glycolysis; pyruvate from D-glyceraldehyde 3-phosphate: step 4/5. Catalyzes the reversible conversion of 2-phosphoglycerate (2-PG) into phosphoenolpyruvate (PEP). It is essential for the degradation of carbohydrates via glycolysis. The sequence is that of Enolase from Methylibium petroleiphilum (strain ATCC BAA-1232 / LMG 22953 / PM1).